An 80-amino-acid chain; its full sequence is Clavanin-D (80 aa).

Residues 1–19 form the signal peptide; the sequence is MKTTILILLILGLGINAKS. A propeptide spanning residues 20–29 is cleaved from the precursor; that stretch reads LEERKSEEEK. A Phenylalanine amide modification is found at phenylalanine 52. Residues 54 to 80 constitute a propeptide that is removed on maturation; the sequence is DDQQDNGKFYGHYAEDNGKHWYDTGDQ.

Hemocytes and pharyngeal tissues.

The protein localises to the secreted. Functionally, has antimicrobial activity against E.coli, L.monocytogenes and C.albicans. The chain is Clavanin-D from Styela clava (Sea squirt).